Here is a 130-residue protein sequence, read N- to C-terminus: Glycine cleavage system H protein (130 aa).

In terms of domain architecture, Lipoyl-binding spans 24–106; that stretch reads TFTVGITDHA…YGDGWLYRIT (83 aa). An N6-lipoyllysine modification is found at lysine 65.

It belongs to the GcvH family. As to quaternary structure, the glycine cleavage system is composed of four proteins: P, T, L and H. (R)-lipoate is required as a cofactor.

In terms of biological role, the glycine cleavage system catalyzes the degradation of glycine. The H protein shuttles the methylamine group of glycine from the P protein to the T protein. In Coxiella burnetii (strain CbuK_Q154) (Coxiella burnetii (strain Q154)), this protein is Glycine cleavage system H protein.